A 152-amino-acid polypeptide reads, in one-letter code: FMN reductase (NADH) RutF (152 aa).

Belongs to the non-flavoprotein flavin reductase family. RutF subfamily.

It carries out the reaction FMNH2 + NAD(+) = FMN + NADH + 2 H(+). Functionally, catalyzes the reduction of FMN to FMNH2 which is used to reduce pyrimidine by RutA via the Rut pathway. This is FMN reductase (NADH) RutF from Shigella sonnei (strain Ss046).